Consider the following 272-residue polypeptide: Putative phosphoenolpyruvate synthase regulatory protein (272 aa).

Residue Gly152–Thr159 participates in ADP binding.

The protein belongs to the pyruvate, phosphate/water dikinase regulatory protein family. PSRP subfamily.

The catalysed reaction is [pyruvate, water dikinase] + ADP = [pyruvate, water dikinase]-phosphate + AMP + H(+). It carries out the reaction [pyruvate, water dikinase]-phosphate + phosphate + H(+) = [pyruvate, water dikinase] + diphosphate. Its function is as follows. Bifunctional serine/threonine kinase and phosphorylase involved in the regulation of the phosphoenolpyruvate synthase (PEPS) by catalyzing its phosphorylation/dephosphorylation. The polypeptide is Putative phosphoenolpyruvate synthase regulatory protein (Alcanivorax borkumensis (strain ATCC 700651 / DSM 11573 / NCIMB 13689 / SK2)).